Reading from the N-terminus, the 55-residue chain is Large ribosomal subunit protein bL33 (55 aa).

Belongs to the bacterial ribosomal protein bL33 family.

This is Large ribosomal subunit protein bL33 from Buchnera aphidicola subsp. Baizongia pistaciae (strain Bp).